Here is a 98-residue protein sequence, read N- to C-terminus: Integration host factor subunit alpha (98 aa).

The disordered stretch occupies residues 49-72 (FGNFDLRDKNQRPGRNPKTGEDIP).

Belongs to the bacterial histone-like protein family. As to quaternary structure, heterodimer of an alpha and a beta chain.

Functionally, this protein is one of the two subunits of integration host factor, a specific DNA-binding protein that functions in genetic recombination as well as in transcriptional and translational control. This Shewanella loihica (strain ATCC BAA-1088 / PV-4) protein is Integration host factor subunit alpha.